Here is a 238-residue protein sequence, read N- to C-terminus: MKLYPAIDLLNGKSVRLTQGDYDQVSLTEDPLYQAQRLTDAGFAHLHLVDLDGARAQRPINRTVITRIREQTSAFIELGGGIRTLAAMEIYLTIGIDRLILGSAAVSDPDLVEQAIARFGSNRIAVGIDTRAGKVATNGWLTTSQQTANALLTAMQQRGVTTFIVTDIAKDGMMQGPNAQLLADLQQAMPQATIIASGGISLLADLHRLQTAGIQAAIIGKAWQTGAIELAMLKQMEG.

The active-site Proton acceptor is the Asp-8. The active-site Proton donor is the Asp-129.

Belongs to the HisA/HisF family.

The protein resides in the cytoplasm. The enzyme catalyses 1-(5-phospho-beta-D-ribosyl)-5-[(5-phospho-beta-D-ribosylamino)methylideneamino]imidazole-4-carboxamide = 5-[(5-phospho-1-deoxy-D-ribulos-1-ylimino)methylamino]-1-(5-phospho-beta-D-ribosyl)imidazole-4-carboxamide. Its pathway is amino-acid biosynthesis; L-histidine biosynthesis; L-histidine from 5-phospho-alpha-D-ribose 1-diphosphate: step 4/9. The protein is 1-(5-phosphoribosyl)-5-[(5-phosphoribosylamino)methylideneamino] imidazole-4-carboxamide isomerase of Lacticaseibacillus paracasei (strain ATCC 334 / BCRC 17002 / CCUG 31169 / CIP 107868 / KCTC 3260 / NRRL B-441) (Lactobacillus paracasei).